Reading from the N-terminus, the 412-residue chain is Serine hydroxymethyltransferase (412 aa).

(6S)-5,6,7,8-tetrahydrofolate is bound by residues L120 and 124 to 126; that span reads GHL. N6-(pyridoxal phosphate)lysine is present on K228. A (6S)-5,6,7,8-tetrahydrofolate-binding site is contributed by 353 to 355; the sequence is SPF.

This sequence belongs to the SHMT family. In terms of assembly, homodimer. It depends on pyridoxal 5'-phosphate as a cofactor.

Its subcellular location is the cytoplasm. It catalyses the reaction (6R)-5,10-methylene-5,6,7,8-tetrahydrofolate + glycine + H2O = (6S)-5,6,7,8-tetrahydrofolate + L-serine. It participates in one-carbon metabolism; tetrahydrofolate interconversion. It functions in the pathway amino-acid biosynthesis; glycine biosynthesis; glycine from L-serine: step 1/1. Its function is as follows. Catalyzes the reversible interconversion of serine and glycine with tetrahydrofolate (THF) serving as the one-carbon carrier. This reaction serves as the major source of one-carbon groups required for the biosynthesis of purines, thymidylate, methionine, and other important biomolecules. Also exhibits THF-independent aldolase activity toward beta-hydroxyamino acids, producing glycine and aldehydes, via a retro-aldol mechanism. The sequence is that of Serine hydroxymethyltransferase from Lachnoclostridium phytofermentans (strain ATCC 700394 / DSM 18823 / ISDg) (Clostridium phytofermentans).